The sequence spans 530 residues: Lanosterol 14-alpha demethylase CYP51 (530 aa).

The Lumenal portion of the chain corresponds to 1–20 (MSATKSIVGEALEYVNIGLS). The chain crosses the membrane as a helical span at residues 21 to 41 (HFLALPLAQRISLIIIIPFIY). The Cytoplasmic portion of the chain corresponds to 42-530 (NIVWQLLYSL…WEKRNPEQKI (489 aa)). A Glycyl lysine isopeptide (Lys-Gly) (interchain with G-Cter in ubiquitin) cross-link involves residue K116. Position 126 (Y126) interacts with lanosterol. G314 serves as a coordination point for itraconazole. Glycyl lysine isopeptide (Lys-Gly) (interchain with G-Cter in ubiquitin) cross-links involve residues K353 and K454. A Phosphoserine modification is found at S458. C470 provides a ligand contact to heme.

This sequence belongs to the cytochrome P450 family. In terms of assembly, interacts with ERG28. Requires heme as cofactor.

It localises to the endoplasmic reticulum membrane. It carries out the reaction a 14alpha-methyl steroid + 3 reduced [NADPH--hemoprotein reductase] + 3 O2 = a Delta(14) steroid + formate + 3 oxidized [NADPH--hemoprotein reductase] + 4 H2O + 4 H(+). The enzyme catalyses a 14alpha-methyl steroid + reduced [NADPH--hemoprotein reductase] + O2 = a 14alpha-hydroxymethyl steroid + oxidized [NADPH--hemoprotein reductase] + H2O + H(+). It catalyses the reaction a 14alpha-hydroxymethyl steroid + reduced [NADPH--hemoprotein reductase] + O2 = a 14alpha-formyl steroid + oxidized [NADPH--hemoprotein reductase] + 2 H2O + H(+). The catalysed reaction is a 14alpha-formyl steroid + reduced [NADPH--hemoprotein reductase] + O2 = a Delta(14) steroid + formate + oxidized [NADPH--hemoprotein reductase] + H2O + 2 H(+). It carries out the reaction lanosterol + 3 reduced [NADPH--hemoprotein reductase] + 3 O2 = 4,4-dimethyl-5alpha-cholesta-8,14,24-trien-3beta-ol + formate + 3 oxidized [NADPH--hemoprotein reductase] + 4 H2O + 4 H(+). The enzyme catalyses lanosterol + reduced [NADPH--hemoprotein reductase] + O2 = 32-hydroxylanosterol + oxidized [NADPH--hemoprotein reductase] + H2O + H(+). It catalyses the reaction 32-hydroxylanosterol + reduced [NADPH--hemoprotein reductase] + O2 = 32-oxolanosterol + oxidized [NADPH--hemoprotein reductase] + 2 H2O + H(+). The catalysed reaction is 32-oxolanosterol + reduced [NADPH--hemoprotein reductase] + O2 = 4,4-dimethyl-5alpha-cholesta-8,14,24-trien-3beta-ol + formate + oxidized [NADPH--hemoprotein reductase] + H2O + 2 H(+). Its pathway is steroid biosynthesis; zymosterol biosynthesis; zymosterol from lanosterol: step 1/6. Sterol 14alpha-demethylase that plays a critical role in the third module of ergosterol biosynthesis pathway, being ergosterol the major sterol component in fungal membranes that participates in a variety of functions. The third module or late pathway involves the ergosterol synthesis itself through consecutive reactions that mainly occur in the endoplasmic reticulum (ER) membrane. Starting from lanosterol (lanosta-8,24-dien-3beta-ol), it catalyzes the three-step oxidative removal of the 14alpha-methyl group (C-32) of the sterol in the form of formate, and converts the sterol to 4,4-dimethyl-5alpha-cholesta-8,14,24-trien-3beta-ol, which is critical for ergosterol biosynthesis. Can demethylate substrates not intrinsic to yeast, such as eburicol (24-methylene-24,25-dihydrolanosterol) at a similar rate to lanosterol, and at a lower rate the 24,25-dihydrolanosterol (DHL) to 4,4-dimethyl-8,14-cholestadien-3beta-ol. The polypeptide is Lanosterol 14-alpha demethylase CYP51 (Saccharomyces cerevisiae (strain ATCC 204508 / S288c) (Baker's yeast)).